The following is a 266-amino-acid chain: uncharacterized protein (266 aa).

The N-terminal stretch at 1 to 22 (MGYFKRVVLYIIVMVVSVFIIG) is a signal peptide. The N-palmitoyl cysteine moiety is linked to residue Cys-23. Cys-23 carries S-diacylglycerol cysteine lipidation.

The protein belongs to the staphylococcal tandem lipoprotein family.

The protein localises to the cell membrane. This is an uncharacterized protein from Staphylococcus aureus (strain N315).